We begin with the raw amino-acid sequence, 356 residues long: Histidinol-phosphate aminotransferase (356 aa).

Lys210 carries the post-translational modification N6-(pyridoxal phosphate)lysine.

The protein belongs to the class-II pyridoxal-phosphate-dependent aminotransferase family. Histidinol-phosphate aminotransferase subfamily. Homodimer. Requires pyridoxal 5'-phosphate as cofactor.

It carries out the reaction L-histidinol phosphate + 2-oxoglutarate = 3-(imidazol-4-yl)-2-oxopropyl phosphate + L-glutamate. Its pathway is amino-acid biosynthesis; L-histidine biosynthesis; L-histidine from 5-phospho-alpha-D-ribose 1-diphosphate: step 7/9. In Acetobacter pasteurianus (Acetobacter turbidans), this protein is Histidinol-phosphate aminotransferase (hisC).